A 200-amino-acid polypeptide reads, in one-letter code: Holliday junction branch migration complex subunit RuvA (200 aa).

Positions 1–65 are domain I; sequence MYEYIKGTLT…ETEHVLYGFS (65 aa). Residues 66 to 144 form a domain II region; that stretch reads SRAEKECFRL…TLMPLYLEEP (79 aa). The flexible linker stretch occupies residues 145–149; that stretch reads VVPSS. Positions 150–200 are domain III; sequence TANSSFKEGIGALMNLGFSRLAADRMMTEAVKELSEEASVAELLPIALRKS.

This sequence belongs to the RuvA family. Homotetramer. Forms an RuvA(8)-RuvB(12)-Holliday junction (HJ) complex. HJ DNA is sandwiched between 2 RuvA tetramers; dsDNA enters through RuvA and exits via RuvB. An RuvB hexamer assembles on each DNA strand where it exits the tetramer. Each RuvB hexamer is contacted by two RuvA subunits (via domain III) on 2 adjacent RuvB subunits; this complex drives branch migration. In the full resolvosome a probable DNA-RuvA(4)-RuvB(12)-RuvC(2) complex forms which resolves the HJ.

Its subcellular location is the cytoplasm. In terms of biological role, the RuvA-RuvB-RuvC complex processes Holliday junction (HJ) DNA during genetic recombination and DNA repair, while the RuvA-RuvB complex plays an important role in the rescue of blocked DNA replication forks via replication fork reversal (RFR). RuvA specifically binds to HJ cruciform DNA, conferring on it an open structure. The RuvB hexamer acts as an ATP-dependent pump, pulling dsDNA into and through the RuvAB complex. HJ branch migration allows RuvC to scan DNA until it finds its consensus sequence, where it cleaves and resolves the cruciform DNA. The sequence is that of Holliday junction branch migration complex subunit RuvA from Chlamydia trachomatis serovar A (strain ATCC VR-571B / DSM 19440 / HAR-13).